Consider the following 129-residue polypeptide: Glycine cleavage system H protein (129 aa).

One can recognise a Lipoyl-binding domain in the interval 24–106; the sequence is TYTVGITEHA…YAGGWIFKIK (83 aa). Lys65 is subject to N6-lipoyllysine.

Belongs to the GcvH family. As to quaternary structure, the glycine cleavage system is composed of four proteins: P, T, L and H. It depends on (R)-lipoate as a cofactor.

In terms of biological role, the glycine cleavage system catalyzes the degradation of glycine. The H protein shuttles the methylamine group of glycine from the P protein to the T protein. The protein is Glycine cleavage system H protein of Escherichia coli O127:H6 (strain E2348/69 / EPEC).